A 377-amino-acid polypeptide reads, in one-letter code: Putrescine transport ATP-binding protein PotG (377 aa).

Residues 20–250 (LEIRNLTKSY…PTTRYSAEFI (231 aa)) enclose the ABC transporter domain. 52–59 (GASGCGKS) serves as a coordination point for ATP.

The protein belongs to the ABC transporter superfamily. As to quaternary structure, the complex is composed of two ATP-binding proteins (PotG), two transmembrane proteins (PotH and PotI) and a solute-binding protein (PotF).

The protein localises to the cell inner membrane. It catalyses the reaction putrescine(out) + ATP + H2O = putrescine(in) + ADP + phosphate + H(+). Transport is feedback inhibited by intracellular polyamines. Functionally, part of the ABC transporter complex PotFGHI involved in putrescine uptake. Responsible for energy coupling to the transport system. Imports putrescine for maintenance of the optimal concentration of polyamines necessary for cell growth in the presence of glucose. The chain is Putrescine transport ATP-binding protein PotG from Escherichia coli (strain K12).